Consider the following 383-residue polypeptide: Lipid-A-disaccharide synthase (383 aa).

The protein belongs to the LpxB family.

The enzyme catalyses 2-N,3-O-bis[(3R)-3-hydroxytetradecanoyl]-alpha-D-glucosaminyl 1-phosphate + UDP-2-N,3-O-bis[(3R)-3-hydroxytetradecanoyl]-alpha-D-glucosamine = lipid A disaccharide (E. coli) + UDP + H(+). It carries out the reaction a lipid X + a UDP-2-N,3-O-bis[(3R)-3-hydroxyacyl]-alpha-D-glucosamine = a lipid A disaccharide + UDP + H(+). The protein operates within glycolipid biosynthesis; lipid IV(A) biosynthesis; lipid IV(A) from (3R)-3-hydroxytetradecanoyl-[acyl-carrier-protein] and UDP-N-acetyl-alpha-D-glucosamine: step 5/6. Functionally, condensation of UDP-2,3-diacylglucosamine and 2,3-diacylglucosamine-1-phosphate to form lipid A disaccharide, a precursor of lipid A, a phosphorylated glycolipid that anchors the lipopolysaccharide to the outer membrane of the cell. In Pectobacterium carotovorum subsp. carotovorum (strain PC1), this protein is Lipid-A-disaccharide synthase.